A 119-amino-acid chain; its full sequence is Large ribosomal subunit protein bL19 (119 aa).

It belongs to the bacterial ribosomal protein bL19 family.

This protein is located at the 30S-50S ribosomal subunit interface and may play a role in the structure and function of the aminoacyl-tRNA binding site. The chain is Large ribosomal subunit protein bL19 from Pediococcus pentosaceus (strain ATCC 25745 / CCUG 21536 / LMG 10740 / 183-1w).